Consider the following 377-residue polypeptide: O-phospho-L-seryl-tRNA:Cys-tRNA synthase (377 aa).

Residues 83–84 (AR), Asn-188, and 211–213 (SGH) contribute to the pyridoxal 5'-phosphate site. Lys-214 carries the post-translational modification N6-(pyridoxal phosphate)lysine.

This sequence belongs to the SepCysS family. Homodimer. Interacts with SepRS. Requires pyridoxal 5'-phosphate as cofactor.

The catalysed reaction is O-phospho-L-seryl-tRNA(Cys) + hydrogen sulfide + H(+) = L-cysteinyl-tRNA(Cys) + phosphate. In terms of biological role, converts O-phospho-L-seryl-tRNA(Cys) (Sep-tRNA(Cys)) to L-cysteinyl-tRNA(Cys) (Cys-tRNA(Cys)). In Methanothermobacter thermautotrophicus (strain ATCC 29096 / DSM 1053 / JCM 10044 / NBRC 100330 / Delta H) (Methanobacterium thermoautotrophicum), this protein is O-phospho-L-seryl-tRNA:Cys-tRNA synthase.